We begin with the raw amino-acid sequence, 264 residues long: Small ribosomal subunit protein uS2 (264 aa).

Belongs to the universal ribosomal protein uS2 family.

In Synechococcus sp. (strain JA-2-3B'a(2-13)) (Cyanobacteria bacterium Yellowstone B-Prime), this protein is Small ribosomal subunit protein uS2.